A 142-amino-acid polypeptide reads, in one-letter code: MGATALPPIWQMYLKDHRIYTFKNWPFLEDCSCTPERMAEAGFIHCPTENEPDLAQCFFCFKELEGWEPDDNPIEEHRKHSPGCAFLTVKKQVEELTVSEFLKLDKQRAKNKIAKETNNKQKEFEETRRTVRQSIEQLAALR.

The stretch at 18–88 (RIYTFKNWPF…KHSPGCAFLT (71 aa)) is one BIR repeat. The residue at position 23 (Lys23) is an N6-acetyllysine. At Thr34 the chain carries Phosphothreonine; by CDK1 and CDK15. Thr48 carries the post-translational modification Phosphothreonine. Zn(2+) is bound by residues Cys57, Cys60, His77, and Cys84. 4 positions are modified to N6-acetyllysine: Lys90, Lys110, Lys112, and Lys115. Position 117 is a phosphothreonine; by AURKB (Thr117).

The protein belongs to the IAP family. As to quaternary structure, monomer or homodimer. Exists as a homodimer in the apo state and as a monomer in the CPC-bound state. The monomer protects cells against apoptosis more efficiently than the dimer. Only the dimeric form is capable of enhancing tubulin stability in cells. When phosphorylated, interacts with LAMTOR5/HBXIP; the resulting complex binds pro-CASP9, as well as active CASP9, but much less efficiently. Component of the chromosomal passenger complex (CPC) composed of at least BIRC5/survivin, CDCA8/borealin, INCENP, AURKB or AURKC; in the complex forms a triple-helix bundle-based subcomplex with INCENP and CDCA8. Interacts with JTB. Interacts (via BIR domain) with histone H3 phosphorylated at 'Thr-3' (H3pT3). Interacts with EVI5. Interacts with GTP-bound RAN in both the S and M phases of the cell cycle. Interacts with USP9X. Interacts with tubulin. Interacts with BIRC2/c-IAP1. The monomeric form interacts with XIAP/BIRC4. Both the dimeric and monomeric form can interact with DIABLO/SMAC. Interacts with BIRC6/bruce. Interacts with FBXL7; this interaction facilitates the polyubiquitination and subsequent proteasomal degradation of BIRC5 by the SCF(FBXL7) E3 ubiquitin-protein ligase complex. Ubiquitinated by the Cul9-RING ubiquitin-protein ligase complex, leading to its degradation. Ubiquitination is required for centrosomal targeting. Deubiquitinated by USP35 or USP38; leading to stabilization. In terms of processing, in vitro phosphorylation at Thr-117 by AURKB prevents interaction with INCENP and localization to mitotic chromosomes. Phosphorylation at Thr-48 by CK2 is critical for its mitotic and anti-apoptotic activities. Phosphorylation at Thr-34 by CDK15 is critical for its anti-apoptotic activity.

Its subcellular location is the cytoplasm. The protein resides in the nucleus. It localises to the chromosome. It is found in the centromere. The protein localises to the cytoskeleton. Its subcellular location is the spindle. The protein resides in the kinetochore. It localises to the midbody. Its function is as follows. Multitasking protein that has dual roles in promoting cell proliferation and preventing apoptosis. Component of a chromosome passage protein complex (CPC) which is essential for chromosome alignment and segregation during mitosis and cytokinesis. Acts as an important regulator of the localization of this complex; directs CPC movement to different locations from the inner centromere during prometaphase to midbody during cytokinesis and participates in the organization of the center spindle by associating with polymerized microtubules. Involved in the recruitment of CPC to centromeres during early mitosis via association with histone H3 phosphorylated at 'Thr-3' (H3pT3) during mitosis. The complex with RAN plays a role in mitotic spindle formation by serving as a physical scaffold to help deliver the RAN effector molecule TPX2 to microtubules. May counteract a default induction of apoptosis in G2/M phase. The acetylated form represses STAT3 transactivation of target gene promoters. May play a role in neoplasia. Inhibitor of CASP3 and CASP7. Essential for the maintenance of mitochondrial integrity and function. This Rattus norvegicus (Rat) protein is Baculoviral IAP repeat-containing protein 5 (Birc5).